Here is a 199-residue protein sequence, read N- to C-terminus: N-(5'-phosphoribosyl)anthranilate isomerase (199 aa).

This sequence belongs to the TrpF family.

It carries out the reaction N-(5-phospho-beta-D-ribosyl)anthranilate = 1-(2-carboxyphenylamino)-1-deoxy-D-ribulose 5-phosphate. It participates in amino-acid biosynthesis; L-tryptophan biosynthesis; L-tryptophan from chorismate: step 3/5. This Campylobacter jejuni subsp. jejuni serotype O:6 (strain 81116 / NCTC 11828) protein is N-(5'-phosphoribosyl)anthranilate isomerase.